The sequence spans 152 residues: Acyl carrier protein, mitochondrial (152 aa).

Residues 73–148 (KLINERVLLV…DIIKYVADKE (76 aa)) form the Carrier domain. Ser108 is subject to O-(pantetheine 4'-phosphoryl)serine.

Belongs to the acyl carrier protein (ACP) family. As to quaternary structure, complex I is composed of about 45 different subunits.

Its subcellular location is the mitochondrion. In terms of biological role, carrier of the growing fatty acid chain in fatty acid biosynthesis. Accessory and non-catalytic subunit of the mitochondrial membrane respiratory chain NADH dehydrogenase (Complex I), which functions in the transfer of electrons from NADH to the respiratory chain. This Drosophila melanogaster (Fruit fly) protein is Acyl carrier protein, mitochondrial.